A 186-amino-acid chain; its full sequence is Probable peptidoglycan L,D-endopeptidase MepK (186 aa).

An N-terminal signal peptide occupies residues 1 to 30; it reads MNYVDQNKRKWLSLGGIALGISILPNSVLA. Zn(2+)-binding residues include His-134, Asp-141, and His-174.

It belongs to the peptidase M15 family. It depends on Zn(2+) as a cofactor.

The protein operates within cell wall biogenesis; cell wall polysaccharide biosynthesis. L,D-endopeptidase that cleaves meso-diaminopimelic acid (mDAP)-mDAP cross-links in peptidoglycan. It works in conjunction with other elongation-specific D,D-endopeptidases to make space for efficient incorporation of nascent peptidoglycan strands into the sacculus and thus enable cell wall expansion. The polypeptide is Probable peptidoglycan L,D-endopeptidase MepK (Haemophilus influenzae (strain ATCC 51907 / DSM 11121 / KW20 / Rd)).